The following is a 210-amino-acid chain: Large ribosomal subunit protein uL4 (210 aa).

The span at 41–51 (QNNARQGNASA) shows a compositional bias: polar residues. A disordered region spans residues 41-77 (QNNARQGNASAKTRAEVRGGGRKPWKQKGTGRARAGS). Basic residues predominate over residues 60 to 71 (GGRKPWKQKGTG).

Belongs to the universal ribosomal protein uL4 family. As to quaternary structure, part of the 50S ribosomal subunit.

In terms of biological role, one of the primary rRNA binding proteins, this protein initially binds near the 5'-end of the 23S rRNA. It is important during the early stages of 50S assembly. It makes multiple contacts with different domains of the 23S rRNA in the assembled 50S subunit and ribosome. Forms part of the polypeptide exit tunnel. The protein is Large ribosomal subunit protein uL4 of Synechocystis sp. (strain ATCC 27184 / PCC 6803 / Kazusa).